A 159-amino-acid polypeptide reads, in one-letter code: Bacterioferritin (159 aa).

Positions 1–145 (MQGDPEVLRL…TQLELMDKLG (145 aa)) constitute a Ferritin-like diiron domain. Fe cation-binding residues include E18 and E51. M52 lines the heme b pocket. Residues H54, E94, E127, and H130 each coordinate Fe cation.

Belongs to the bacterioferritin family. Homooligomer of 24 subunits, arranged as 12 dimers, that are packed together to form an approximately spherical molecule with a central cavity, in which large amounts of iron can be deposited. The cofactor is heme b.

It catalyses the reaction 4 Fe(2+) + O2 + 4 H(+) = 4 Fe(3+) + 2 H2O. The catalysed reaction is Fe(2+)(in) = Fe(2+)(out). Functionally, iron-storage protein, whose ferroxidase center binds Fe(2+), oxidizes it using dioxygen to Fe(3+), and participates in the subsequent Fe(3+) oxide mineral core formation within the central cavity of the BFR protein shell. The sequence is that of Bacterioferritin (bfr) from Mycolicibacterium paratuberculosis (strain ATCC BAA-968 / K-10) (Mycobacterium paratuberculosis).